The sequence spans 175 residues: Ribosome maturation factor RimM (175 aa).

The 75-residue stretch at 98-172 folds into the PRC barrel domain; sequence DGEFHVRDLQ…WLLITPPKGL (75 aa).

Belongs to the RimM family. Binds ribosomal protein uS19.

It localises to the cytoplasm. An accessory protein needed during the final step in the assembly of 30S ribosomal subunit, possibly for assembly of the head region. Essential for efficient processing of 16S rRNA. May be needed both before and after RbfA during the maturation of 16S rRNA. It has affinity for free ribosomal 30S subunits but not for 70S ribosomes. The sequence is that of Ribosome maturation factor RimM from Synechococcus sp. (strain RCC307).